We begin with the raw amino-acid sequence, 300 residues long: Type II restriction enzyme HindIII (300 aa).

It carries out the reaction Endonucleolytic cleavage of DNA to give specific double-stranded fragments with terminal 5'-phosphates.. Its function is as follows. A P subtype restriction enzyme that recognizes the double-stranded sequence 5'-AAGCTT-3' and cleaves after A-1. This is Type II restriction enzyme HindIII from Haemophilus influenzae (strain ATCC 51907 / DSM 11121 / KW20 / Rd).